We begin with the raw amino-acid sequence, 535 residues long: F-box protein At1g56610 (535 aa).

3 consecutive transmembrane segments (helical) span residues 3 to 23 (FALV…SSSI), 37 to 57 (VLLL…LCLF), and 82 to 102 (LAPH…SLLF). Residues 73 to 119 (TELCDLPKCLAPHILSWLPTKTAVTVSLLFMKGWWRSEMKNLSSLKF) form the F-box; degenerate domain.

As to quaternary structure, part of a SCF (ASK-cullin-F-box) protein ligase complex. Interacts with ASK4.

The protein localises to the membrane. The protein operates within protein modification; protein ubiquitination. Its function is as follows. Component of SCF(ASK-cullin-F-box) E3 ubiquitin ligase complexes, which may mediate the ubiquitination and subsequent proteasomal degradation of target proteins. The sequence is that of F-box protein At1g56610 from Arabidopsis thaliana (Mouse-ear cress).